A 29-amino-acid polypeptide reads, in one-letter code: U-limacoditoxin(12)-Dv72 (29 aa).

The signal sequence occupies residues 1–15; that stretch reads MNFGMLKLLTVLIIC. Asn27 carries the asparagine amide modification.

It belongs to the limacoditoxin-12 family. As to expression, expressed by the venom secretory cell of the spine. The spine is a cuticular structure containing a single large nucleated venom-secreting cell at its base. It is an independent unit capable of producing, storing and injecting venom. On the back of D.vulnerans caterpillars, spines are grouped together by 50 to 100 to form scoli, of which there are eight in D.vulnerans.

The protein resides in the secreted. In terms of biological role, probable toxin. Does not show insecticidal, antimicrobial and antiparasitic activities. Does not induce increase in intracellular calcium in mouse DRG neurons, suggesting that it does not induce pain. This Doratifera vulnerans (Mottled cup moth) protein is U-limacoditoxin(12)-Dv72.